The sequence spans 245 residues: Probable 2-phosphosulfolactate phosphatase (245 aa).

The protein belongs to the ComB family. It depends on Mg(2+) as a cofactor.

It catalyses the reaction (2R)-O-phospho-3-sulfolactate + H2O = (2R)-3-sulfolactate + phosphate. This chain is Probable 2-phosphosulfolactate phosphatase, found in Synechococcus sp. (strain RCC307).